The sequence spans 206 residues: RNA pyrophosphohydrolase (206 aa).

In terms of domain architecture, Nudix hydrolase spans 6-149 (GYRPNVGIVL…KRGVYARALR (144 aa)). The short motif at 38–59 (GGMNTDETPVEAMYRELQEETG) is the Nudix box element. Positions 175-206 (MPGHTAGHDRPRKRPRTRGYWPKKATGDGPAS) are disordered.

The protein belongs to the Nudix hydrolase family. RppH subfamily. The cofactor is a divalent metal cation.

Functionally, accelerates the degradation of transcripts by removing pyrophosphate from the 5'-end of triphosphorylated RNA, leading to a more labile monophosphorylated state that can stimulate subsequent ribonuclease cleavage. The polypeptide is RNA pyrophosphohydrolase (Stenotrophomonas maltophilia (strain K279a)).